We begin with the raw amino-acid sequence, 575 residues long: Acyloxyacyl hydrolase (575 aa).

An N-terminal signal peptide occupies residues M1–A23. The propeptide occupies S24 to S34. Positions N37–T118 constitute a Saposin B-type domain. The interval G38–C70 is important for enzyme activity, localization to cytoplasmic vesicles, and protein stability. 8 disulfide bridges follow: C41–C114, C44–C108, C70–C83, C123–C453, C160–C169, C206–C230, C249–C329, and C376–C459. A glycan (N-linked (GlcNAc...) asparagine) is linked at N59. Residues K173–E177 are lipopolysaccharide binding. Ca(2+) is bound by residues D184, D186, D188, Y190, D205, N207, D208, D210, V213, D223, D227, N229, N231, I233, and E245. N207 carries N-linked (GlcNAc...) asparagine glycosylation. Residue S263 is part of the active site. Residues N409 and N466 are each glycosylated (N-linked (GlcNAc...) asparagine).

As to quaternary structure, heterodimer of the large and small subunits; disulfide-linked. Ca(2+) is required as a cofactor. Post-translationally, cleaved into a large and a small subunit. The small subunit is N-glycosylated.

It localises to the secreted. The protein localises to the cytoplasmic vesicle. It catalyses the reaction a 3-(acyloxy)acyl derivative of bacterial toxin + H2O = a 3-hydroxyacyl derivative of bacterial toxin + a fatty acid + H(+). With respect to regulation, inhibited by EDTA. In terms of biological role, removes the secondary (acyloxyacyl-linked) fatty acyl chains from the lipid A region of bacterial lipopolysaccharides. By breaking down LPS, terminates the host response to bacterial infection and prevents prolonged and damaging inflammatory responses. In peritoneal macrophages, seems to be important for recovery from a state of immune tolerance following infection by Gram-negative bacteria. The chain is Acyloxyacyl hydrolase from Homo sapiens (Human).